A 55-amino-acid polypeptide reads, in one-letter code: Trypsin inhibitor (55 aa).

The 55-residue stretch at 1–55 (AHMDCTEFNPLCRCNKMLGDLICAVIGDAKEEHRNMCALCCEHPGGFEYSNGPCE) folds into the Kazal-like domain. 4 cysteine pairs are disulfide-bonded: Cys-5-Cys-40, Cys-12-Cys-41, Cys-14-Cys-37, and Cys-23-Cys-54.

It localises to the secreted. Its function is as follows. Potent inhibitor of trypsin. The polypeptide is Trypsin inhibitor (Halocynthia roretzi (Sea squirt)).